The chain runs to 1230 residues: MSSRNWTGPQEAAIGCREKNLLVAAGAGSGKTAVLVERVIRRISDPAAPVDVDRLLVVTFTNAAAAEMRKRVAEALERELEKHPGMPLLEHQLRLLPQADITTIHSFCAELLRRYHYLIDLDPEFRVADETEAAILRQETLEEFFEEQYRVITGDPDLEFLVEAYGGERDDLKLQNLVSGLHRFARSNPWPEAWLARAAAFGADPQGLDGDGPLAWGLRDLVGTGLEAAVFELRAALEAAKAPGGPAVYADALAAEVEGTARLAGLVAGDWEPLRAAFLAFGFTPRLPAARAGVDQELKDLCSRCRKKAKERIQNLKETFFARRPEELLSEMAALGPAMRRLAALAADFGEAYRTAKLARNLVDFADLEHYCLQILLAPGSTPEAPVPSPVAAGLREYYVEVLVDEYQDINAVQETILRLVSRQDAAAPNLFMVGDVKQSIYRFRLAEPALFLEKYRAFDTGEDAGGARRIDLSHNFRSRESIIHAVNAVFRRIMTPAVGELAYDTAAELVCGGTPAQLEGSGPPVEVHLLGAPTSVGRDTAGTADDEPDRSDEADLTAVQREARLVAGIIRRLAGLGGECTVPYRDIVVLMRATTGKAGTYLEEFRRQNIPAYAKVGTGYFEAVEVETVLSLLKVIDNPHQDIPLAGVLRSPLVGLGAAELAAVRLADKEGDFFRAVVAAAGQGGRLGAVLAGFLERLEKWRSQARCGSLADLIWDVYRTTGYYDYVGGLPGGAGRQANLRALYDRARQYEATAFRGLFRFLRFIELLQEGGQDLGPAPALAESENVVRIMSIHQAKGLEFPVVILADMGRRFYMPDLNGEVLLHKDLGLGPYFVDPGARVSHPTAAWHVVRERLRREQLAEEMRILYVAMTRARERLILTGSAGRLEQAVLRWSHAAAGDGETLPVPVLAEAESFLDWVMPVLMAHPDGEPLRRLAVRSRPAAGTPKDRSRWEVHLHRPEDLEEAAGADPDTAAVLESLRRLAPIPADGGLDEAVHRALSWHYPWSALASCGAKISATEVKRRFAAAAAGEEEVPAVFPYRAPPARPAFLETARGLSPQAFGRAMHVVLQHLDLAGDLSVDGIRAQVAGLEEREFLTATEARAIDAEKLAGLFAGGLGRRLAGALWVRREWPFCLVVPAHEIYPGLEGHPEERVMVQGIIDCLFAEPDGLVLVDYKTDRVGPGGEAALADRYRGQLDLYARAVEAVLRRRVKERYLFLVMTGSAQIIQ.

Positions 4-480 (RNWTGPQEAA…IDLSHNFRSR (477 aa)) constitute a UvrD-like helicase ATP-binding domain. Position 25–32 (25–32 (AGAGSGKT)) interacts with ATP. Positions 517–799 (AQLEGSGPPV…RIMSIHQAKG (283 aa)) constitute a UvrD-like helicase C-terminal domain. A disordered region spans residues 535–554 (TSVGRDTAGTADDEPDRSDE). Positions 545-554 (ADDEPDRSDE) are enriched in acidic residues.

It belongs to the helicase family. AddA subfamily. In terms of assembly, heterodimer of AddA and AddB/RexB. Requires Mg(2+) as cofactor.

It catalyses the reaction Couples ATP hydrolysis with the unwinding of duplex DNA by translocating in the 3'-5' direction.. The catalysed reaction is ATP + H2O = ADP + phosphate + H(+). Functionally, the heterodimer acts as both an ATP-dependent DNA helicase and an ATP-dependent, dual-direction single-stranded exonuclease. Recognizes the chi site generating a DNA molecule suitable for the initiation of homologous recombination. The AddA nuclease domain is required for chi fragment generation; this subunit has the helicase and 3' -&gt; 5' nuclease activities. In Desulforudis audaxviator (strain MP104C), this protein is ATP-dependent helicase/nuclease subunit A.